Here is a 2499-residue protein sequence, read N- to C-terminus: Probable polyketide synthase 23 (2499 aa).

The Ketosynthase family 3 (KS3) domain occupies 11 to 430; the sequence is DNQVAIVGLG…GSNACVLLSE (420 aa). Active-site for beta-ketoacyl synthase activity residues include cysteine 177, histidine 316, and histidine 354. The tract at residues 623–656 is acyl/malonyl transferases; the sequence is GITPSIIVGHSLGEVASAFCSGMIDLETACFVIY. The active-site For acyl/malonyl transferase activity is the serine 633. An N-terminal hotdog fold region spans residues 924–1044; sequence INQLGNKNEL…SRILMKSLDV (121 aa). Positions 924–1209 constitute a PKS/mFAS DH domain; it reads INQLGNKNEL…IASTLSTNID (286 aa). The active-site Proton acceptor; for dehydratase activity is histidine 956. The tract at residues 1059 to 1209 is C-terminal hotdog fold; that stretch reads NWSTLKREQL…IASTLSTNID (151 aa). Aspartate 1121 (proton donor; for dehydratase activity) is an active-site residue. Residues 2414 to 2491 enclose the Carrier domain; the sequence is EKEFSIRQDI…QIINIVTTKV (78 aa). Residue serine 2451 is modified to O-(pantetheine 4'-phosphoryl)serine.

Pantetheine 4'-phosphate serves as cofactor.

Probable polyketide synthase. In Dictyostelium discoideum (Social amoeba), this protein is Probable polyketide synthase 23 (pks23).